Reading from the N-terminus, the 87-residue chain is Small ribosomal subunit protein bS20 (87 aa).

The protein belongs to the bacterial ribosomal protein bS20 family.

Functionally, binds directly to 16S ribosomal RNA. This is Small ribosomal subunit protein bS20 from Mycoplasma pneumoniae (strain ATCC 29342 / M129 / Subtype 1) (Mycoplasmoides pneumoniae).